Reading from the N-terminus, the 367-residue chain is Dye-decolorizing peroxidase (367 aa).

Asp152 (proton acceptor) is an active-site residue. His225 provides a ligand contact to heme. Residues 311–367 (DPDGELAAAEPSDAQNDDPASASARIEETDPPNPASADDPAPADDSLGIGSLRRRDQ) are disordered. The span at 345 to 356 (ASADDPAPADDS) shows a compositional bias: low complexity. The interval 358-365 (GIGSLRRR) is targeting peptide.

This sequence belongs to the DyP-type peroxidase family. In terms of assembly, homohexamer. Heme b serves as cofactor.

The protein localises to the encapsulin nanocompartment. Cargo protein of a type 1 encapsulin nanocompartment. Has both general peroxidase activity and dye-decolorizing activity. Can catalyze the oxidation of both protoporphyrinogen IX and coproporphyrinogen III to their corresponding porphyrins. Also efficiently decolorizes the dyes alizarin red and Cibacron blue F3GA. This cargo-loaded encapsulin nanocompartment is probably involved in protection against oxidative damage. The sequence is that of Dye-decolorizing peroxidase from Brevibacterium linens.